The chain runs to 68 residues: Protein DsrB (68 aa).

It belongs to the DsrB family.

The protein is Protein DsrB of Sodalis glossinidius (strain morsitans).